The sequence spans 242 residues: Ribonuclease PH (242 aa).

Residues R89 and G127–R129 each bind phosphate.

This sequence belongs to the RNase PH family. Homohexameric ring arranged as a trimer of dimers.

It carries out the reaction tRNA(n+1) + phosphate = tRNA(n) + a ribonucleoside 5'-diphosphate. Its function is as follows. Phosphorolytic 3'-5' exoribonuclease that plays an important role in tRNA 3'-end maturation. Removes nucleotide residues following the 3'-CCA terminus of tRNAs; can also add nucleotides to the ends of RNA molecules by using nucleoside diphosphates as substrates, but this may not be physiologically important. Probably plays a role in initiation of 16S rRNA degradation (leading to ribosome degradation) during starvation. The polypeptide is Ribonuclease PH (Neisseria meningitidis serogroup A / serotype 4A (strain DSM 15465 / Z2491)).